A 366-amino-acid polypeptide reads, in one-letter code: Latent membrane protein 1 (366 aa).

The Cytoplasmic segment spans residues 1–23; it reads MERDLERGPPGPPRPPLGPPLSS. The chain crosses the membrane as a helical span at residues 24–44; sequence SIGLALLLLLLALLFWLYIVL. The Extracellular portion of the chain corresponds to 45-51; sequence SNWTGGA. A helical transmembrane segment spans residues 52-72; it reads LLVLYSFALMLIIIILIIFIF. Over 73 to 75 the chain is Cytoplasmic; sequence RRD. The helical transmembrane segment at 76-96 threads the bilayer; sequence LLCPLGGLGLLLLMVTLLLIA. Over 97–106 the chain is Extracellular; that stretch reads LWNLHGQALY. The chain crosses the membrane as a helical span at residues 107–127; it reads LGIVLFIFGCLLVLGLWIYFL. The Cytoplasmic segment spans residues 128 to 139; sequence EILWRLGATIWQ. A helical transmembrane segment spans residues 140–160; it reads LLAFILAFFLAIILLIIALYL. The Extracellular segment spans residues 161-163; sequence QQN. A helical transmembrane segment spans residues 164–184; sequence WWTLLVDLLWLLLFMAILIWM. Over 185–366 the chain is Cytoplasmic; that stretch reads YFHGPRHTDE…HGPVQLSYYD (182 aa). The tract at residues 194 to 232 is CTAR1; that stretch reads EHHHDDSLPHPQQATDDSSHESDSNSNEGRHHLLVSGAG. Positions 194-366 are disordered; that stretch reads EHHHDDSLPH…HGPVQLSYYD (173 aa). The Interaction with host TRAF proteins signature appears at 204 to 208; the sequence is PQQAT. Basic and acidic residues predominate over residues 210-224; it reads DSSHESDSNSNEGRH. 2 stretches are compositionally biased toward low complexity: residues 251–267 and 337–346; these read NGPQDPDNTDDNGPQDP and PHLPTLLLGT. A CTAR2 region spans residues 332-366; sequence GGGGDPHLPTLLLGTSGSGGDDDDPHGPVQLSYYD.

Belongs to the herpesviridae LMP-1 family. In terms of assembly, interacts (via PXQXT motif) with host tumor necrosis factor receptor-associated factor (TRAF) proteins TRAF1, TRAF2, TRAF3 and TRAF5. Interacts with human protein ZMYND11; leading to negatively regulate NF-kappa-B activation. Interacts with host UBE2I; this interaction induces the sumoylation of various cellular proteins. Interacts with host IRF7. In terms of processing, ubiquitinated on the N-terminus.

It is found in the host cell membrane. Its function is as follows. Acts as a CD40 functional homolog to prevent apoptosis of infected B-lymphocytes and drive their proliferation. Functions as a constitutively active tumor necrosis factor receptor that induces the activation of several signaling pathways, including those of the NF-kappa-B family. LMP1 signaling leads to up-regulation of antiapoptotic proteins and provide growth signals in latently infected cells. Interacts with host UBE2I and subsequently affects the sumoylation state of several cellular proteins. For example, induces the sumoylation of host IRF7 thereby limiting its transcriptional activity and modulating the activation of innate immune responses. Also inhibits host IFN-alpha-stimulated STAT2 nuclear translocation and interferon-stimulated response element transcriptional activity by interacting with and inhibiting host TYK2. Induces SUMO expression during viral latency thereby dysregulating the host sumoylation processes. This Homo sapiens (Human) protein is Latent membrane protein 1 (LMP1).